The chain runs to 741 residues: Cysteine--tRNA ligase, cytoplasmic (741 aa).

Residue Cys46 participates in Zn(2+) binding. The 'HIGH' region signature appears at 48-58; sequence PTVYDASHMGH. Ser297 carries the phosphoserine modification. The Zn(2+) site is built by Cys340, His365, and Glu369. The short motif at 398–402 is the 'KMSKS' region element; it reads KMSKS. An ATP-binding site is contributed by Lys401.

It belongs to the class-I aminoacyl-tRNA synthetase family. Zn(2+) is required as a cofactor.

It is found in the cytoplasm. It catalyses the reaction tRNA(Cys) + L-cysteine + ATP = L-cysteinyl-tRNA(Cys) + AMP + diphosphate. This is Cysteine--tRNA ligase, cytoplasmic (Aats-cys) from Drosophila pseudoobscura pseudoobscura (Fruit fly).